A 566-amino-acid chain; its full sequence is Protein RocB (566 aa).

Involved in arginine degradative pathway. The protein is Protein RocB (rocB) of Bacillus subtilis (strain 168).